A 93-amino-acid polypeptide reads, in one-letter code: Small ribosomal subunit protein bS20c (93 aa).

It belongs to the bacterial ribosomal protein bS20 family.

It localises to the plastid. Its subcellular location is the chloroplast. Its function is as follows. Binds directly to 16S ribosomal RNA. The polypeptide is Small ribosomal subunit protein bS20c (Phaeodactylum tricornutum (strain CCAP 1055/1)).